The chain runs to 431 residues: uncharacterized protein (431 aa).

Disordered stretches follow at residues 1 to 37 (MFWR…KLTP) and 102 to 132 (PPPL…RRVA). Over residues 22–32 (GDFRRSSDPRL) the composition is skewed to basic and acidic residues. Residues 106–121 (LSAGASRESAPRQPGP) show a composition bias toward low complexity. Residues 122–132 (GERERPRRRVA) show a composition bias toward basic and acidic residues.

It is found in the cytoplasm. This is an uncharacterized protein from Homo sapiens (Human).